A 177-amino-acid chain; its full sequence is Peptidyl-tRNA hydrolase (177 aa).

Y12 contributes to the tRNA binding site. H17 serves as the catalytic Proton acceptor. 3 residues coordinate tRNA: F63, N65, and N111.

Belongs to the PTH family. In terms of assembly, monomer.

Its subcellular location is the cytoplasm. The enzyme catalyses an N-acyl-L-alpha-aminoacyl-tRNA + H2O = an N-acyl-L-amino acid + a tRNA + H(+). In terms of biological role, hydrolyzes ribosome-free peptidyl-tRNAs (with 1 or more amino acids incorporated), which drop off the ribosome during protein synthesis, or as a result of ribosome stalling. Its function is as follows. Catalyzes the release of premature peptidyl moieties from peptidyl-tRNA molecules trapped in stalled 50S ribosomal subunits, and thus maintains levels of free tRNAs and 50S ribosomes. This chain is Peptidyl-tRNA hydrolase, found in Buchnera aphidicola subsp. Acyrthosiphon pisum (strain 5A).